We begin with the raw amino-acid sequence, 365 residues long: Anhydro-N-acetylmuramic acid kinase (365 aa).

ATP is bound at residue 9–16 (GTSLDGVD).

The protein belongs to the anhydro-N-acetylmuramic acid kinase family.

It catalyses the reaction 1,6-anhydro-N-acetyl-beta-muramate + ATP + H2O = N-acetyl-D-muramate 6-phosphate + ADP + H(+). The protein operates within amino-sugar metabolism; 1,6-anhydro-N-acetylmuramate degradation. Its pathway is cell wall biogenesis; peptidoglycan recycling. Catalyzes the specific phosphorylation of 1,6-anhydro-N-acetylmuramic acid (anhMurNAc) with the simultaneous cleavage of the 1,6-anhydro ring, generating MurNAc-6-P. Is required for the utilization of anhMurNAc either imported from the medium or derived from its own cell wall murein, and thus plays a role in cell wall recycling. The chain is Anhydro-N-acetylmuramic acid kinase from Zymomonas mobilis subsp. mobilis (strain ATCC 31821 / ZM4 / CP4).